The sequence spans 157 residues: Histidine-containing phosphotransfer protein 5 (157 aa).

N-acetylmethionine is present on Met1. Residues 41–148 (TPDFVAEVVS…NLEKQILQAG (108 aa)) enclose the HPt domain. His83 is modified (phosphohistidine).

Interacts with the B-type response regulators ARR1 and ARR2. Binds to AHK2, AHK3, AHK4 and AHK5. In terms of processing, two-component system major event consists of a His-to-Asp phosphorelay between a sensor histidine kinase (HK) and a response regulator (RR). In plants, the His-to-Asp phosphorelay involves an additional intermediate named Histidine-containing phosphotransfer protein (HPt). This multistep phosphorelay consists of a His-Asp-His-Asp sequential transfer of a phosphate group between first a His and an Asp of the HK protein, followed by the transfer to a conserved His of the HPt protein and finally the transfer to an Asp in the receiver domain of the RR protein. Expressed in the whole plant.

The protein resides in the cytoplasm. The protein localises to the cytosol. It is found in the nucleus. Functions as a two-component phosphorelay mediator between cytokinin sensor histidine kinases and response regulators (B-type ARRs). Plays an important role in propagating cytokinin signal transduction through the multistep His-to-Asp phosphorelay. The sequence is that of Histidine-containing phosphotransfer protein 5 (AHP5) from Arabidopsis thaliana (Mouse-ear cress).